The chain runs to 381 residues: Mannitol-1-phosphate 5-dehydrogenase (381 aa).

Threonine 3–glycine 14 lines the NAD(+) pocket.

Belongs to the mannitol dehydrogenase family.

The enzyme catalyses D-mannitol 1-phosphate + NAD(+) = beta-D-fructose 6-phosphate + NADH + H(+). The chain is Mannitol-1-phosphate 5-dehydrogenase from Aeromonas salmonicida (strain A449).